A 374-amino-acid polypeptide reads, in one-letter code: Putative G-protein coupled receptor-like protein B0244.6 (374 aa).

Residues 1–54 are Extracellular-facing; the sequence is MTQNHYTTSIFANCSKHYEFEILLETCTNSTNPCHAVSQIQSAITIAYVDYYTS. Residues 55 to 75 traverse the membrane as a helical segment; it reads VALFSIAALLDIYCLIITIPL. The Cytoplasmic segment spans residues 76–86; it reads YRRMKDDSKKK. A helical membrane pass occupies residues 87-107; sequence YVFLITRCISGLLLVVAWLLI. Over 108–137 the chain is Extracellular; sequence QCIYLRFIAPSQDNLPYYVLALALNIGSTY. A helical transmembrane segment spans residues 138-158; sequence VLLGSYVGMAGILYLGVLNPI. Topologically, residues 159 to 169 are cytoplasmic; the sequence is AFNQHLTLRIV. The helical transmembrane segment at 170–190 threads the bilayer; sequence YIAVCIIFVISIFISIPLAIF. Over 191–216 the chain is Extracellular; sequence QALMTVPTSSMSCTDTACAPLITLIN. The chain crosses the membrane as a helical span at residues 217–237; the sequence is FVLVFGSLITTTLTLTFVLIS. Residues 238–262 are Cytoplasmic-facing; it reads LCRHRKEFKKLDTTSNTSLNSAVRL. A helical membrane pass occupies residues 263-283; sequence LKFTLFAVLLLVAAEVIPFVI. The Extracellular segment spans residues 284–304; it reads SETKKKHSVVTGCYYFYHSGK. The chain crosses the membrane as a helical span at residues 305–325; that stretch reads VIQYAVFALTESSIWSIALII. Over 326 to 374 the chain is Cytoplasmic; that stretch reads DPLINIIFDRTVSKKATDQVKWMRKSCVGLVRKVTKRSNPENFTETSEI.

Belongs to the G-protein coupled receptor 1 family. B0244 subfamily.

The protein resides in the cell membrane. This is Putative G-protein coupled receptor-like protein B0244.6 from Caenorhabditis elegans.